We begin with the raw amino-acid sequence, 529 residues long: Peptide chain release factor 3 (529 aa).

Positions 11 to 280 (AKRRTFAIIS…GLVEWAPAPM (270 aa)) constitute a tr-type G domain. GTP contacts are provided by residues 20–27 (SHPDAGKT), 88–92 (DTPGH), and 142–145 (NKLD).

This sequence belongs to the TRAFAC class translation factor GTPase superfamily. Classic translation factor GTPase family. PrfC subfamily.

It localises to the cytoplasm. Increases the formation of ribosomal termination complexes and stimulates activities of RF-1 and RF-2. It binds guanine nucleotides and has strong preference for UGA stop codons. It may interact directly with the ribosome. The stimulation of RF-1 and RF-2 is significantly reduced by GTP and GDP, but not by GMP. The protein is Peptide chain release factor 3 of Shigella sonnei (strain Ss046).